The chain runs to 405 residues: Tryptophan synthase beta chain (405 aa).

Residue Lys-98 is modified to N6-(pyridoxal phosphate)lysine.

This sequence belongs to the TrpB family. In terms of assembly, tetramer of two alpha and two beta chains. Pyridoxal 5'-phosphate is required as a cofactor.

The catalysed reaction is (1S,2R)-1-C-(indol-3-yl)glycerol 3-phosphate + L-serine = D-glyceraldehyde 3-phosphate + L-tryptophan + H2O. It functions in the pathway amino-acid biosynthesis; L-tryptophan biosynthesis; L-tryptophan from chorismate: step 5/5. Functionally, the beta subunit is responsible for the synthesis of L-tryptophan from indole and L-serine. The sequence is that of Tryptophan synthase beta chain from Xylella fastidiosa (strain M23).